The primary structure comprises 745 residues: Phosphoribosylformylglycinamidine synthase subunit PurL (745 aa).

The active site involves His-47. ATP contacts are provided by Tyr-50 and Lys-90. Glu-92 provides a ligand contact to Mg(2+). Residues 93-96 (SHNH) and Arg-115 each bind substrate. The active-site Proton acceptor is the His-94. Asp-116 lines the Mg(2+) pocket. Residue Gln-240 participates in substrate binding. Asp-268 is a Mg(2+) binding site. Position 312 to 314 (312 to 314 (ESQ)) interacts with substrate. 2 residues coordinate ATP: Asn-501 and Gly-538. Residue Asn-539 coordinates Mg(2+). Ser-541 contacts substrate.

The protein belongs to the FGAMS family. In terms of assembly, monomer. Part of the FGAM synthase complex composed of 1 PurL, 1 PurQ and 2 PurS subunits.

It localises to the cytoplasm. The catalysed reaction is N(2)-formyl-N(1)-(5-phospho-beta-D-ribosyl)glycinamide + L-glutamine + ATP + H2O = 2-formamido-N(1)-(5-O-phospho-beta-D-ribosyl)acetamidine + L-glutamate + ADP + phosphate + H(+). Its pathway is purine metabolism; IMP biosynthesis via de novo pathway; 5-amino-1-(5-phospho-D-ribosyl)imidazole from N(2)-formyl-N(1)-(5-phospho-D-ribosyl)glycinamide: step 1/2. Functionally, part of the phosphoribosylformylglycinamidine synthase complex involved in the purines biosynthetic pathway. Catalyzes the ATP-dependent conversion of formylglycinamide ribonucleotide (FGAR) and glutamine to yield formylglycinamidine ribonucleotide (FGAM) and glutamate. The FGAM synthase complex is composed of three subunits. PurQ produces an ammonia molecule by converting glutamine to glutamate. PurL transfers the ammonia molecule to FGAR to form FGAM in an ATP-dependent manner. PurS interacts with PurQ and PurL and is thought to assist in the transfer of the ammonia molecule from PurQ to PurL. The chain is Phosphoribosylformylglycinamidine synthase subunit PurL from Leptospira borgpetersenii serovar Hardjo-bovis (strain JB197).